The chain runs to 134 residues: FK506-binding protein 2 (134 aa).

An N-terminal signal peptide occupies residues Met-1–Ala-19. The 89-residue stretch at Gly-39–Asp-127 folds into the PPIase FKBP-type domain. The Prevents secretion from ER signature appears at Lys-131–Leu-134.

The protein belongs to the FKBP-type PPIase family. FKBP2 subfamily.

It is found in the endoplasmic reticulum. It catalyses the reaction [protein]-peptidylproline (omega=180) = [protein]-peptidylproline (omega=0). Inhibited by both FK506 and rapamycin. PPIases accelerate the folding of proteins. It catalyzes the cis-trans isomerization of proline imidic peptide bonds in oligopeptides. In Aspergillus oryzae (strain ATCC 42149 / RIB 40) (Yellow koji mold), this protein is FK506-binding protein 2 (fpr2).